A 501-amino-acid chain; its full sequence is Nuclear receptor subfamily 5 group A member 2 (501 aa).

A DNA-binding region (nuclear receptor) is located at residues 43-114 (EELCPVCGDK…KCLSVGMKLE (72 aa)). The Zn(2+) site is built by Cys46, Cys49, Cys63, Cys66, Cys82, Cys88, Cys98, and Cys101. NR C4-type zinc fingers lie at residues 46 to 66 (CPVC…CESC) and 82 to 106 (CIEN…FQKC). The C-terminal extension (CTE) stretch occupies residues 112 to 127 (KLEAVRADRMRGGRNK). An FTZ-F1 box motif is present at residues 128-147 (FGPMYKRDRALKQQKKALIR). Residues 186 to 207 (NHTALPPTDYDRSPFVTSPISM) are disordered. An NR LBD domain is found at 260 to 499 (SIPHLILELQ…NLLIEMLHAK (240 aa)). Residues 381–384 (GATL), Tyr476, and Lys480 each bind a phospholipid derivative. The tract at residues 488-499 (CNNLLIEMLHAK) is AF-2.

Belongs to the nuclear hormone receptor family. NR5 subfamily. As to quaternary structure, monomer; Binds DNA as a monomer. In terms of tissue distribution, detected in liver and adrenal gland.

It localises to the nucleus. Its subcellular location is the chromosome. Orphan nuclear receptor that binds DNA as a monomer to the 5'-TCAAGGCCA-3' sequence and controls expression of target genes: regulates key biological processes, such as cholesterol and bile acid synthesis pathways, as well as cartilage, liver and pancreas morphogenesis. Ligand-binding causes conformational change which causes recruitment of coactivators, promoting target gene activation. The specific ligand is unknown, but specific phospholipids, such as phosphatidylethanolamine, phosphatidylserine, dilauroyl phosphatidylcholine and diundecanoyl phosphatidylcholine can act as ligand in vitro. Acts as a pioneer transcription factor, which unwraps target DNA from histones and elicits local opening of closed chromatin. Involved in the formation of connective tissue in lower jaw. In Gallus gallus (Chicken), this protein is Nuclear receptor subfamily 5 group A member 2.